We begin with the raw amino-acid sequence, 193 residues long: Phosphoheptose isomerase (193 aa).

One can recognise an SIS domain in the interval 37-193; that stretch reads LADSFKAGGK…QLIEKEMVKA (157 aa). Residue 52 to 54 coordinates substrate; it reads NGG. Residues H61 and E65 each contribute to the Zn(2+) site. Residues E65, 93-94, 119-121, S124, and Q172 contribute to the substrate site; these read ND and STS. Q172 and H180 together coordinate Zn(2+).

The protein belongs to the SIS family. GmhA subfamily. In terms of assembly, homotetramer. Zn(2+) serves as cofactor.

The protein localises to the cytoplasm. It catalyses the reaction 2 D-sedoheptulose 7-phosphate = D-glycero-alpha-D-manno-heptose 7-phosphate + D-glycero-beta-D-manno-heptose 7-phosphate. The protein operates within carbohydrate biosynthesis; D-glycero-D-manno-heptose 7-phosphate biosynthesis; D-glycero-alpha-D-manno-heptose 7-phosphate and D-glycero-beta-D-manno-heptose 7-phosphate from sedoheptulose 7-phosphate: step 1/1. In terms of biological role, catalyzes the isomerization of sedoheptulose 7-phosphate in D-glycero-D-manno-heptose 7-phosphate. This Yersinia pseudotuberculosis serotype O:1b (strain IP 31758) protein is Phosphoheptose isomerase.